The sequence spans 288 residues: Bifunctional protein FolD (288 aa).

NADP(+) is bound by residues 164-166, Ser193, and Ile234; that span reads GRS.

The protein belongs to the tetrahydrofolate dehydrogenase/cyclohydrolase family. Homodimer.

It catalyses the reaction (6R)-5,10-methylene-5,6,7,8-tetrahydrofolate + NADP(+) = (6R)-5,10-methenyltetrahydrofolate + NADPH. The enzyme catalyses (6R)-5,10-methenyltetrahydrofolate + H2O = (6R)-10-formyltetrahydrofolate + H(+). It functions in the pathway one-carbon metabolism; tetrahydrofolate interconversion. Its function is as follows. Catalyzes the oxidation of 5,10-methylenetetrahydrofolate to 5,10-methenyltetrahydrofolate and then the hydrolysis of 5,10-methenyltetrahydrofolate to 10-formyltetrahydrofolate. The chain is Bifunctional protein FolD from Nitratidesulfovibrio vulgaris (strain DSM 19637 / Miyazaki F) (Desulfovibrio vulgaris).